The sequence spans 367 residues: snRNA-activating protein complex subunit 1 (367 aa).

An SNAPC3-binding region spans residues 1–168 (MGTPPGLQTD…EEFKDPSDRV (168 aa)). An SNAPC4-binding region spans residues 164 to 268 (PSDRVMKLIT…AESLAKIKSK (105 aa)). 2 disordered regions span residues 228–254 (KDRK…QETE) and 278–367 (KSRR…KRKH). The segment covering 238–254 (KINDGEEKMEGNSQETE) has biased composition (basic and acidic residues). A phosphoserine mark is found at Ser289 and Ser290. The span at 292–301 (CDSASGQGQV) shows a compositional bias: polar residues.

Part of the SNAPc complex composed of 5 subunits: SNAPC1, SNAPC2, SNAPC3, SNAPC4 and SNAPC5. SNAPC1 interacts with SNAPC3, SNAPC4 and TBP.

The protein resides in the nucleus. Part of the SNAPc complex required for the transcription of both RNA polymerase II and III small-nuclear RNA genes. Binds to the proximal sequence element (PSE), a non-TATA-box basal promoter element common to these 2 types of genes. Recruits TBP and BRF2 to the U6 snRNA TATA box. This chain is snRNA-activating protein complex subunit 1 (SNAPC1), found in Macaca fascicularis (Crab-eating macaque).